The chain runs to 511 residues: Aminotransferase FGSG_17085 (511 aa).

165–166 (GA) contributes to the pyridoxal 5'-phosphate binding site. Tyr-200 contacts substrate. Asp-310 lines the pyridoxal 5'-phosphate pocket. Lys-339 is modified (N6-(pyridoxal phosphate)lysine). Gly-371 provides a ligand contact to substrate. 372–373 (HT) serves as a coordination point for pyridoxal 5'-phosphate.

It belongs to the class-III pyridoxal-phosphate-dependent aminotransferase family. The cofactor is pyridoxal 5'-phosphate.

The protein operates within secondary metabolite biosynthesis. In terms of biological role, aminotransferase; part of the gene cluster that mediates the biosynthesis of the lipopeptide fusaristatin A. Fusaristatin A consists of a polyketide chain linked to three amino acid residues glutamine (Gln), dehydroalanine (dehydro-Ala), and beta-aminoisobutyric acid. The biosynthesis starts with formation of a linear polyketide chain by the highly reducing polyketide synthase PKS6. The gene cluster does not contain an acyl-CoA ligase or an acyl-transferase, and it is therefore predicted that the polyketide is transferred directly to the nonribosomal peptide synthetase NRPS7. Modules 1-3 from NRPS7 incorporate dehydro-Ala, Gln, and beta-aminoisobutyric acid in the compound, which is released by cyclization. The beta-aminoisobutyric acid units are most likely not freely available to the NRPS, but can be synthesized from thymine, which requires a dehydrogenase, a monooxygenase, and an aminotransferase. The fusaristatin A cluster contains a cytochrome P450 monooxygenase (FGSG_08207) and an aminotransferase (FGSG_17085), which theoretically can perform two of the enzymatic steps. The enzymes may however also be involved in biosynthesis of dehydroalanine or modification of the polyketide. The dehydro-Ala residue can be a result of cyclization, where serine is dehydrated. The last gene of the cluster encodes a protein with an A/B barrel domain found in variable enzymes, which hampers functional prediction. The polypeptide is Aminotransferase FGSG_17085 (Gibberella zeae (strain ATCC MYA-4620 / CBS 123657 / FGSC 9075 / NRRL 31084 / PH-1) (Wheat head blight fungus)).